The primary structure comprises 561 residues: DNA ligase B (561 aa).

The active-site N6-AMP-lysine intermediate is the Lys125.

Belongs to the NAD-dependent DNA ligase family. LigB subfamily.

The catalysed reaction is NAD(+) + (deoxyribonucleotide)n-3'-hydroxyl + 5'-phospho-(deoxyribonucleotide)m = (deoxyribonucleotide)n+m + AMP + beta-nicotinamide D-nucleotide.. Its function is as follows. Catalyzes the formation of phosphodiester linkages between 5'-phosphoryl and 3'-hydroxyl groups in double-stranded DNA using NAD as a coenzyme and as the energy source for the reaction. This is DNA ligase B from Salmonella gallinarum (strain 287/91 / NCTC 13346).